The chain runs to 676 residues: F420-dependent formate dehydrogenase 2 subunit alpha (676 aa).

Residues 4–60 (FKVVHTICPYCGTGCGIDLVVKDGKVVDSHPFKRHPVNEGKVCIKGNYCYEFVHSED) form the 4Fe-4S Mo/W bis-MGD-type domain. Residues cysteine 11, cysteine 14, cysteine 18, and cysteine 46 each coordinate [4Fe-4S] cluster. Selenocysteine 133 is a non-standard amino acid (selenocysteine).

It belongs to the prokaryotic molybdopterin-containing oxidoreductase family. In terms of assembly, dimer of an alpha (FdhA2) and a beta (FdhB2) subunit. The cofactor is [4Fe-4S] cluster. Mo-bis(molybdopterin guanine dinucleotide) is required as a cofactor. Zn(2+) serves as cofactor.

It carries out the reaction oxidized coenzyme F420-(gamma-L-Glu)(n) + formate + 2 H(+) = reduced coenzyme F420-(gamma-L-Glu)(n) + CO2. Functionally, catalyzes the oxidation of formate to carbon dioxide, with coenzyme F420 as the electron acceptor. In vitro can also use methyl viologen as electron acceptor. This is F420-dependent formate dehydrogenase 2 subunit alpha from Methanococcus maripaludis (strain DSM 14266 / JCM 13030 / NBRC 101832 / S2 / LL).